The following is a 501-amino-acid chain: MNKKNIMFLGTASSVGKSTLVAALCRVLKNEDFKVSPFKAMNISLNSYVTKDGAEMGRAQVVQAEASKIEPSALMNPILLKPSGGHTQVIVNGKVYDNIEPYEYKELNKKLKGIVKESYDRISNEYDLIVLEGSGGCAEINLKDTDIANMNMAECVDAPVILVADIDRGGVFASIVGTLNLLSENERKRVKGVIINKFRGKKEYFEPGVKQLEDIIKIPVLGVMPYEYFDIDDEDSVTEKISNKESTEAKNIDIAIIRLSHMSNFTDFNVLNRINGVNIRYVESTKYLKNPDVIIIPGTKNTIEDLRILKESKLANEIIKLHESGTLVFGICGGYQMLGKLLLDQQGVEGSTFQEEGLGLLDIKTRFNERKVTKQVEAQVVSNLKHINEIENKSLVGYEIHNGISKVGKNAKPFIKDSKGKIIGVCDMEGSVAGTYLHGIFDSEEFTNSFINALKKNNNFELLENDELDKVSDYKNEQYEKLAKVFSDNIDVSKIKEIMGI.

Positions 251-446 (NIDIAIIRLS…LHGIFDSEEF (196 aa)) constitute a GATase cobBQ-type domain. The Nucleophile role is filled by C332. Residue H438 is part of the active site.

Belongs to the CobB/CobQ family. CobQ subfamily.

Its pathway is cofactor biosynthesis; adenosylcobalamin biosynthesis. Its function is as follows. Catalyzes amidations at positions B, D, E, and G on adenosylcobyrinic A,C-diamide. NH(2) groups are provided by glutamine, and one molecule of ATP is hydrogenolyzed for each amidation. The sequence is that of Cobyric acid synthase from Clostridium botulinum (strain Alaska E43 / Type E3).